Reading from the N-terminus, the 197-residue chain is MMHFRKKSSISNTSDHDGANRASDVKISEDDKARLKMRTASVADPILDAVQEAQPFEQAADTFHDNMNRQSYFSNEEGHVLCDVFGQPITQADISNPTRARDERPLDTIRSFEYAVSGDPVWAQQLETPTYGFRVRPDFPVFGAAVTYDANGMPQQVGGASSQMYGEQAVYQPQQHVQTEEKQKKKKKGLFGRMKKK.

Residues 1 to 31 (MMHFRKKSSISNTSDHDGANRASDVKISEDD) form a disordered region. A phosphoserine mark is found at S11 and S23. Residues 14–31 (SDHDGANRASDVKISEDD) show a composition bias toward basic and acidic residues. Glycyl lysine isopeptide (Lys-Gly) (interchain with G-Cter in ubiquitin) cross-links involve residues K26 and K32. Residues 157–197 (VGGASSQMYGEQAVYQPQQHVQTEEKQKKKKKGLFGRMKKK) are disordered. Over residues 158–177 (GGASSQMYGEQAVYQPQQHV) the composition is skewed to polar residues. Basic residues predominate over residues 184–197 (KKKKKGLFGRMKKK).

It to yeast YGR273c.

This is an uncharacterized protein from Saccharomyces cerevisiae (strain ATCC 204508 / S288c) (Baker's yeast).